The chain runs to 517 residues: GMP synthase [glutamine-hydrolyzing] (517 aa).

The Glutamine amidotransferase type-1 domain maps to 11 to 202; the sequence is KIIVLDYGSQ…AFDVCHAEAN (192 aa). Catalysis depends on Cys88, which acts as the Nucleophile. Catalysis depends on residues His176 and Glu178. The region spanning 203 to 392 is the GMPS ATP-PPase domain; it reads WSMDDFITKQ…LGMPHSLVWR (190 aa). 230–236 lines the ATP pocket; sequence SGGVDSS.

As to quaternary structure, homodimer.

It catalyses the reaction XMP + L-glutamine + ATP + H2O = GMP + L-glutamate + AMP + diphosphate + 2 H(+). It participates in purine metabolism; GMP biosynthesis; GMP from XMP (L-Gln route): step 1/1. Catalyzes the synthesis of GMP from XMP. The chain is GMP synthase [glutamine-hydrolyzing] (guaA) from Lacticaseibacillus rhamnosus (Lactobacillus rhamnosus).